We begin with the raw amino-acid sequence, 296 residues long: Guided entry of tail-anchored proteins factor CAMLG (296 aa).

The tract at residues 1-79 (MESMAVATDG…SDKLNSLSVP (79 aa)) is disordered. The Cytoplasmic segment spans residues 1 to 189 (MESMAVATDG…NTTEEFDSFR (189 aa)). The residue at position 55 (Ser55) is a Phosphoserine. Over residues 61 to 72 (SQTKSKQQDSDK) the composition is skewed to basic and acidic residues. Residues 190 to 207 (IFRLVGCALLALGVRAFV) form a helical membrane-spanning segment. Residues 208 to 212 (CKYLS) lie on the Lumenal side of the membrane. An intrachain disulfide couples Cys208 to Cys284. The chain crosses the membrane as a helical span at residues 213-231 (IFAPFLTLQLAYMGLYKYF). Over 232–269 (PKSEKKIKTTVLTAALLLSGIPAEVINRSMDTYSKMGE) the chain is Cytoplasmic. A helical transmembrane segment spans residues 270–288 (VFTDLCVYFFTFIFCHELL). Topologically, residues 289–296 (DYWGSEVP) are lumenal.

As to quaternary structure, component of the Golgi to ER traffic (GET) complex, which is composed of GET1/WRB, CAMLG/GET2 and GET3/TRC40. Within the complex, GET1 and CAMLG form a heterotetramer which is stabilized by phosphatidylinositol binding and which binds to the GET3 homodimer. Interacts (via C-terminus) with GET1. Interacts (via N-terminus) with GET3. GET3 shows a higher affinity for CAMLG than for GET1. Interacts (via N-terminus) with TNFRSF13B/TACI (via C-terminus). In terms of assembly, (Microbial infection) Interacts with human herpes virus 8/HHV-8 protein K7; this interaction modulates intracellular calcium concentration. In terms of tissue distribution, ubiquitous. Highest levels in brain, testis and ovary.

The protein resides in the endoplasmic reticulum membrane. Its function is as follows. Required for the post-translational delivery of tail-anchored (TA) proteins to the endoplasmic reticulum. Together with GET1/WRB, acts as a membrane receptor for soluble GET3/TRC40, which recognizes and selectively binds the transmembrane domain of TA proteins in the cytosol. Required for the stability of GET1. Stimulates calcium signaling in T cells through its involvement in elevation of intracellular calcium. Essential for the survival of peripheral follicular B cells. This is Guided entry of tail-anchored proteins factor CAMLG from Homo sapiens (Human).